Reading from the N-terminus, the 140-residue chain is Cytochrome B5 isoform D (140 aa).

A Cytochrome b5 heme-binding domain is found at 5 to 81 (GKVFTLSEVS…LDEYYVGDID (77 aa)). 2 residues coordinate heme: histidine 40 and histidine 64. The helical transmembrane segment at 109-129 (FVIKLLQFLVPLLILGLAFGI) threads the bilayer.

Belongs to the cytochrome b5 family. In terms of assembly, interacts with CER1, BI-1, FAH1 and FAH2. As to expression, expressed in roots, stems, leaves, flowers and siliques.

The protein resides in the endoplasmic reticulum membrane. Functionally, membrane bound hemoprotein which function as an electron carrier for several membrane bound oxygenases, including fatty acid desaturases. This chain is Cytochrome B5 isoform D, found in Arabidopsis thaliana (Mouse-ear cress).